The primary structure comprises 123 residues: Large ribosomal subunit protein uL29 (123 aa).

It belongs to the universal ribosomal protein uL29 family. Component of the large ribosomal subunit.

It is found in the cytoplasm. Functionally, component of the large ribosomal subunit. The ribosome is a large ribonucleoprotein complex responsible for the synthesis of proteins in the cell. The sequence is that of Large ribosomal subunit protein uL29 (rpl35) from Ictalurus punctatus (Channel catfish).